The chain runs to 591 residues: Oxaloacetate decarboxylase alpha chain (591 aa).

In terms of domain architecture, Pyruvate carboxyltransferase spans 3–263 (IAITDVVLRD…DTGLDILKLE (261 aa)). Positions 518-591 (PAGAGTPVTA…SVGDTLMTLA (74 aa)) constitute a Biotinyl-binding domain. Lys557 bears the N6-biotinyllysine mark.

As to quaternary structure, composed of three chains (alpha, beta, and gamma). The cofactor is biotin.

It catalyses the reaction oxaloacetate + 2 Na(+)(in) + H(+) = pyruvate + 2 Na(+)(out) + CO2. Functionally, catalyzes the decarboxylation of oxaloacetate coupled to Na(+) translocation. The protein is Oxaloacetate decarboxylase alpha chain (oadA1) of Salmonella typhi.